We begin with the raw amino-acid sequence, 427 residues long: Serine--tRNA ligase (427 aa).

231–233 contributes to the L-serine binding site; it reads TAE. An ATP-binding site is contributed by 262-264; that stretch reads RSE. Residue Glu-285 participates in L-serine binding. Position 349 to 352 (349 to 352) interacts with ATP; sequence EISS. Position 385 (Ser-385) interacts with L-serine.

The protein belongs to the class-II aminoacyl-tRNA synthetase family. Type-1 seryl-tRNA synthetase subfamily. As to quaternary structure, homodimer. The tRNA molecule binds across the dimer.

It localises to the cytoplasm. The enzyme catalyses tRNA(Ser) + L-serine + ATP = L-seryl-tRNA(Ser) + AMP + diphosphate + H(+). The catalysed reaction is tRNA(Sec) + L-serine + ATP = L-seryl-tRNA(Sec) + AMP + diphosphate + H(+). It functions in the pathway aminoacyl-tRNA biosynthesis; selenocysteinyl-tRNA(Sec) biosynthesis; L-seryl-tRNA(Sec) from L-serine and tRNA(Sec): step 1/1. Catalyzes the attachment of serine to tRNA(Ser). Is also able to aminoacylate tRNA(Sec) with serine, to form the misacylated tRNA L-seryl-tRNA(Sec), which will be further converted into selenocysteinyl-tRNA(Sec). The chain is Serine--tRNA ligase from Rhizobium johnstonii (strain DSM 114642 / LMG 32736 / 3841) (Rhizobium leguminosarum bv. viciae).